Consider the following 137-residue polypeptide: Large ribosomal subunit protein uL16 (137 aa).

The disordered stretch occupies residues 1–20 (MLQPSNRKYRKDFKGRNRGV). A compositionally biased stretch (basic residues) spans 7–17 (RKYRKDFKGRN).

The protein belongs to the universal ribosomal protein uL16 family. Part of the 50S ribosomal subunit.

In terms of biological role, binds 23S rRNA and is also seen to make contacts with the A and possibly P site tRNAs. This Coxiella burnetii (strain CbuK_Q154) (Coxiella burnetii (strain Q154)) protein is Large ribosomal subunit protein uL16.